The chain runs to 196 residues: Rac-like GTP-binding protein ARAC5 (196 aa).

16–21 contributes to the GTP binding site; sequence AVGKTC. An Effector region motif is present at residues 35 to 43; that stretch reads YVPTVFDNF. Residues 119–121 and 159–161 each bind GTP; these read KLD and SSK. Cys-193 is subject to Cysteine methyl ester. The S-geranylgeranyl cysteine moiety is linked to residue Cys-193. Residues 194-196 constitute a propeptide, removed in mature form; that stretch reads VFL.

It belongs to the small GTPase superfamily. Rho family. Interacts with GDI1 and ROPGEF8 homodimer. Binds to SPK1. As to expression, ubiquitous. Preferentially expressed at the tip of root hairs.

It localises to the cytoplasm. The protein localises to the membrane. Its subcellular location is the cell membrane. In terms of biological role, involved in cell polarity control during the actin-dependent tip growth of root hairs, thus regulating root hair length and root hair initiation. Inactive GDP-bound Rho GTPases reside in the cytosol, are found in a complex with Rho GDP-dissociation inhibitors (Rho GDIs), and are released from the GDI protein in order to translocate to membranes upon activation. This Arabidopsis thaliana (Mouse-ear cress) protein is Rac-like GTP-binding protein ARAC5.